Reading from the N-terminus, the 513-residue chain is Sphingosine-1-phosphate transporter SPNS2 (513 aa).

Transmembrane regions (helical) follow at residues 102–122 (GLLQ…FGYL), 130–150 (VILS…SFIP), 163–183 (LVGI…GDLF), 190–210 (LMLS…YITG), 222–242 (WALR…LIFV), 276–296 (LATS…PLYL), 320–340 (LIFG…GAGA), 354–374 (LVCA…FVAA), 378–398 (IIAA…NWAI), 422–442 (TSHL…SDLI), and 463–483 (LCPF…LFFL).

The protein belongs to the major facilitator superfamily. Spinster (TC 2.A.1.49) family.

It localises to the cell membrane. The protein resides in the endosome membrane. The enzyme catalyses sphing-4-enine 1-phosphate(in) = sphing-4-enine 1-phosphate(out). It catalyses the reaction sphinganine 1-phosphate(in) = sphinganine 1-phosphate(out). Functionally, lipid transporter that specifically mediates export of sphingosine-1-phosphate (sphing-4-enine 1-phosphate, S1P) and sphinganine-1-phosphate. The chain is Sphingosine-1-phosphate transporter SPNS2 (spns2) from Xenopus tropicalis (Western clawed frog).